We begin with the raw amino-acid sequence, 511 residues long: Histidine ammonia-lyase (511 aa).

Residues 143–145 constitute a cross-link (5-imidazolinone (Ala-Gly)); that stretch reads ASG. A 2,3-didehydroalanine (Ser) modification is found at serine 144.

It belongs to the PAL/histidase family. Post-translationally, contains an active site 4-methylidene-imidazol-5-one (MIO), which is formed autocatalytically by cyclization and dehydration of residues Ala-Ser-Gly.

It localises to the cytoplasm. It catalyses the reaction L-histidine = trans-urocanate + NH4(+). Its pathway is amino-acid degradation; L-histidine degradation into L-glutamate; N-formimidoyl-L-glutamate from L-histidine: step 1/3. This is Histidine ammonia-lyase from Vibrio cholerae serotype O1 (strain ATCC 39315 / El Tor Inaba N16961).